Here is a 559-residue protein sequence, read N- to C-terminus: Terpene synthase 1 (559 aa).

Mg(2+) is bound by residues aspartate 312, aspartate 316, aspartate 456, and glutamate 464. The DDXXD motif motif lies at 312-316 (DDLYD).

Belongs to the terpene synthase family. Tpsa subfamily. It depends on Mg(2+) as a cofactor. Requires Mn(2+) as cofactor. Mostly expressed in stems and, to a lower extent, in leaves, roots and fruits.

The catalysed reaction is (2E,6E)-farnesyl diphosphate = (-)-(E)-beta-caryophyllene + diphosphate. It catalyses the reaction (2E,6E)-farnesyl diphosphate = alpha-humulene + diphosphate. It participates in secondary metabolite biosynthesis; terpenoid biosynthesis. Its function is as follows. Sesquiterpene synthase involved in the biosynthesis of volatile compounds that contribute to the characteristic flavors of black pepper. Mediates the conversion of (2E,6E)-farnesyl diphosphate (FPP) into beta-caryophyllene and, as a minor compound, into alpha-humulene. The sequence is that of Terpene synthase 1 from Piper nigrum (Black pepper).